We begin with the raw amino-acid sequence, 141 residues long: Hemoglobin subunit alpha-1/2 (141 aa).

One can recognise a Globin domain in the interval 1 to 141 (VLSPADKTNV…VSTVLTSKYR (141 aa)). Phosphoserine is present on S3. K7 bears the N6-succinyllysine mark. T8 carries the phosphothreonine modification. K11 carries the N6-succinyllysine modification. At K16 the chain carries N6-acetyllysine; alternate. At K16 the chain carries N6-succinyllysine; alternate. Y24 carries the post-translational modification Phosphotyrosine. N6-succinyllysine is present on K40. The residue at position 49 (S49) is a Phosphoserine. H58 provides a ligand contact to O2. H87 provides a ligand contact to heme b. A Phosphoserine modification is found at S102. T108 carries the phosphothreonine modification. At S124 the chain carries Phosphoserine. 2 positions are modified to phosphothreonine: T134 and T137. The residue at position 138 (S138) is a Phosphoserine.

It belongs to the globin family. As to quaternary structure, heterotetramer of two alpha chains and two beta chains. As to expression, red blood cells.

Functionally, involved in oxygen transport from the lung to the various peripheral tissues. In Leptonychotes weddellii (Weddell seal), this protein is Hemoglobin subunit alpha-1/2.